Here is a 502-residue protein sequence, read N- to C-terminus: Potassium channel KAT3 (502 aa).

At 1 to 67 (MPRSSRMNLW…PYDPRYKVWE (67 aa)) the chain is on the cytoplasmic side. The chain crosses the membrane as a helical span at residues 68–88 (TFLIILVVYSAWICPLEFAFL). Over 89–95 (RYLPSAP) the chain is Extracellular. A helical membrane pass occupies residues 96–116 (FVVDDVVNGFFAVDIMLTFFV). The Cytoplasmic portion of the chain corresponds to 117 to 138 (PFVDKKSYLLVNDPKKIAVRYL). Residues 139–159 (SSWFVFDVCSTVPFHSISLLF) form a helical membrane-spanning segment. Topologically, residues 160–169 (NEHGHDLGFK) are extracellular. Residues 170–190 (FLNVLRLWRLRRVSSMFARLE) form a helical; Voltage-sensor membrane-spanning segment. Residues 191–204 (KDIRFNYAVIRCTK) lie on the Cytoplasmic side of the membrane. Residues 205 to 225 (LISVTLFAIHCAGCINYLIAD) traverse the membrane as a helical segment. At 226 to 252 (RYPDPRRTWIGAVMPNFREDGLWIRYV) the chain is on the extracellular side. Residues 253–272 (TAMYWSITTLTTTGYGDLHA) constitute an intramembrane region (pore-forming). Over 273 to 276 (ENAR) the chain is Extracellular. The chain crosses the membrane as a helical span at residues 277–297 (EMLFGICYMLFNLWLTAYLIG). At 298 to 502 (NMTNLVVHST…IRSNLQQVNV (205 aa)) the chain is on the cytoplasmic side. 381 to 500 (LFKGVSSRFI…DIIRSNLQQV (120 aa)) contacts a nucleoside 3',5'-cyclic phosphate.

The protein belongs to the potassium channel family. Plant (TC 1.A.1.4) subfamily.

It localises to the membrane. Its function is as follows. Probable inward-rectifying potassium channel. Assuming opened or closed conformations in response to the voltage difference across the membrane, the channel is activated by hyperpolarization. The sequence is that of Potassium channel KAT3 from Oryza sativa subsp. japonica (Rice).